A 205-amino-acid polypeptide reads, in one-letter code: Putative STAG3-like protein 1 (205 aa).

The SCD domain occupies 10–95 (PKVTCRDVLP…GRFKDWMVSM (86 aa)).

Belongs to the SCC3 family.

Its subcellular location is the nucleus. This chain is Putative STAG3-like protein 1 (STAG3L1), found in Homo sapiens (Human).